The chain runs to 119 residues: Large ribosomal subunit protein bL20 (119 aa).

The protein belongs to the bacterial ribosomal protein bL20 family.

Binds directly to 23S ribosomal RNA and is necessary for the in vitro assembly process of the 50S ribosomal subunit. It is not involved in the protein synthesizing functions of that subunit. The polypeptide is Large ribosomal subunit protein bL20 (Streptococcus gordonii (strain Challis / ATCC 35105 / BCRC 15272 / CH1 / DL1 / V288)).